Here is a 426-residue protein sequence, read N- to C-terminus: Serine/threonine-protein kinase ssn3 (426 aa).

Residues 41 to 368 (YHIVGFISSG…AQEALEHPYF (328 aa)) enclose the Protein kinase domain. ATP is bound by residues 47-55 (ISSGTYGRV) and lysine 71. Catalysis depends on aspartate 173, which acts as the Proton acceptor. The interval 390–426 (RVTQDDNDIRSGSLPGTKRSGLPDDSLMGRAAKRLKE) is disordered.

This sequence belongs to the protein kinase superfamily. CMGC Ser/Thr protein kinase family. CDC2/CDKX subfamily. Component of the srb8-11 complex, a regulatory module of the Mediator complex. It depends on Mg(2+) as a cofactor.

The protein resides in the nucleus. It carries out the reaction L-seryl-[protein] + ATP = O-phospho-L-seryl-[protein] + ADP + H(+). It catalyses the reaction L-threonyl-[protein] + ATP = O-phospho-L-threonyl-[protein] + ADP + H(+). The enzyme catalyses [DNA-directed RNA polymerase] + ATP = phospho-[DNA-directed RNA polymerase] + ADP + H(+). Its function is as follows. Component of the srb8-11 complex. The srb8-11 complex is a regulatory module of the Mediator complex which is itself involved in regulation of basal and activated RNA polymerase II-dependent transcription. The srb8-11 complex may be involved in the transcriptional repression of a subset of genes regulated by Mediator. It may inhibit the association of the Mediator complex with RNA polymerase II to form the holoenzyme complex. The srb8-11 complex phosphorylates the C-terminal domain (CTD) of the largest subunit of RNA polymerase II. This chain is Serine/threonine-protein kinase ssn3 (ssn3), found in Aspergillus clavatus (strain ATCC 1007 / CBS 513.65 / DSM 816 / NCTC 3887 / NRRL 1 / QM 1276 / 107).